We begin with the raw amino-acid sequence, 580 residues long: MAEHAPRRCCLGWDFSTQQVKVVAVDAELNVFYEESVHFDRDLPEFGTQGGVHVHKDGLTVTSPVLMWVQALDIILEKMKASGFDFSQVLALSGAGQQHGSIYWKAGSQQALTSLSPDLPLHQQLQDCFSISDCPVWMDSSSTTQCRQLEAAMGGAQALSCLTGSRAYERFTGNQIAKIYQQNPEAYSHTERISLVSSFAASLFLGSYSPIDYSDGSGMNLLQIQDKVWSQACLGACAPHLEEKLGPPVPSCSVVGAISSYYVQRYGFPPGCKVVAFTGDNPASLAGMRLEEGDIAVSLGTSDTLFLWLQEPMPALEGHIFCNPVDSQHYMALLCFKNGSLMREKIRDESASRSWSDFSKALQSTEMGNGGNLGFYFDVMEITPEIIGRHRFNTENHKVAAFPGDVEVRALIEGQFMAKRIHAEGLGYRVMSKTKILATGGASHNRDILQVLADVFGAPVYVIDTANSACVGSAYRAFHGLAGGTDVPFSEVVKLAPNPRLAATPSPGASQRRWVGVSTTKLVSASDAQHRGSNLGRRVAGAMVRKCGTMLEDTRVLLKQSSWPKPAANLDIIKTPETLS.

The substrate site is built by His-99, Arg-170, Asp-280, and Asn-281. ATP contacts are provided by residues Trp-355, 441-442 (GA), and Asn-445.

Belongs to the FGGY kinase family. As to quaternary structure, monomer.

The enzyme catalyses D-xylulose + ATP = D-xylulose 5-phosphate + ADP + H(+). Phosphorylates D-xylulose to produce D-xylulose 5-phosphate, a molecule that may play an important role in the regulation of glucose metabolism and lipogenesis. The sequence is that of Xylulose kinase (XYLB) from Pongo abelii (Sumatran orangutan).